A 741-amino-acid polypeptide reads, in one-letter code: NAD(P)H-quinone oxidoreductase subunit 5, chloroplastic (741 aa).

The next 16 helical transmembrane spans lie at 9–29 (WIIP…LLLF), 40–60 (WAFQ…NLSI), 89–109 (IDPL…LVLI), 125–145 (FAYM…SNLI), 147–167 (IYIF…FWFT), 185–205 (GDFG…SFEF), 219–239 (NQVN…GAIA), 258–278 (TPIS…FLVA), 289–311 (HIMN…LALA), 327–347 (LGYM…FHLI), 354–374 (ALLF…VGYC), 396–416 (NSFL…CFWS), 425–445 (WLYS…TAFY), 549–569 (LFPI…GIPL), 605–625 (LFSV…YKPV), and 721–741 (YLFF…FLNL).

Belongs to the complex I subunit 5 family. In terms of assembly, NDH is composed of at least 16 different subunits, 5 of which are encoded in the nucleus.

It localises to the plastid. The protein localises to the chloroplast thylakoid membrane. The catalysed reaction is a plastoquinone + NADH + (n+1) H(+)(in) = a plastoquinol + NAD(+) + n H(+)(out). The enzyme catalyses a plastoquinone + NADPH + (n+1) H(+)(in) = a plastoquinol + NADP(+) + n H(+)(out). Functionally, NDH shuttles electrons from NAD(P)H:plastoquinone, via FMN and iron-sulfur (Fe-S) centers, to quinones in the photosynthetic chain and possibly in a chloroplast respiratory chain. The immediate electron acceptor for the enzyme in this species is believed to be plastoquinone. Couples the redox reaction to proton translocation, and thus conserves the redox energy in a proton gradient. This is NAD(P)H-quinone oxidoreductase subunit 5, chloroplastic (ndhF) from Symphyotrichum cordifolium (Heart-leaved aster).